The sequence spans 324 residues: Ferrochelatase (324 aa).

Residues His197 and Glu278 each contribute to the Fe cation site.

Belongs to the ferrochelatase family.

It localises to the cytoplasm. The enzyme catalyses heme b + 2 H(+) = protoporphyrin IX + Fe(2+). The protein operates within porphyrin-containing compound metabolism; protoheme biosynthesis; protoheme from protoporphyrin-IX: step 1/1. Its function is as follows. Catalyzes the ferrous insertion into protoporphyrin IX. This is Ferrochelatase from Aeromonas hydrophila subsp. hydrophila (strain ATCC 7966 / DSM 30187 / BCRC 13018 / CCUG 14551 / JCM 1027 / KCTC 2358 / NCIMB 9240 / NCTC 8049).